The primary structure comprises 510 residues: Pantetheinase (510 aa).

The first 22 residues, 1–22 (MIMSQLLNYVAVLFFCVSRASS), serve as a signal peptide directing secretion. One can recognise a CN hydrolase domain in the interval 31 to 307 (YEHAVILPNA…GKLLLAQLDS (277 aa)). Residue Asn-39 is glycosylated (N-linked (GlcNAc...) asparagine). Glu-80 (proton acceptor) is an active-site residue. N-linked (GlcNAc...) asparagine glycans are attached at residues Asn-87 and Asn-147. Catalysis depends on Lys-179, which acts as the Proton donor. Residue Asn-201 is glycosylated (N-linked (GlcNAc...) asparagine). Cys-212 serves as the catalytic Nucleophile. Residues Asn-316 and Asn-354 are each glycosylated (N-linked (GlcNAc...) asparagine). Residue Asp-492 is the site of GPI-anchor amidated aspartate attachment. A propeptide spans 493-510 (LTTQALRLNPKTDAWKSK) (removed in mature form). Thr-504 carries an O-linked (GalNAc...) threonine glycan.

Belongs to the carbon-nitrogen hydrolase superfamily. BTD/VNN family. Monomer.

Its subcellular location is the cell membrane. It catalyses the reaction (R)-pantetheine + H2O = cysteamine + (R)-pantothenate. In terms of biological role, amidohydrolase that hydrolyzes specifically one of the carboamide linkages in D-pantetheine thus recycling pantothenic acid (vitamin B5) and releasing cysteamine. The chain is Pantetheinase (VNN1) from Bos taurus (Bovine).